The sequence spans 97 residues: MSRICELTGKGRQVGHNVSHANNKTKRTFLPNLQNVTLISDSLGKGVKLRVSTHGLRSVEHVGGLDNWLLKTSDDLLSLRARRLKRDIAKKQQAVAA.

The protein belongs to the bacterial ribosomal protein bL28 family.

The polypeptide is Large ribosomal subunit protein bL28 (Rhizorhabdus wittichii (strain DSM 6014 / CCUG 31198 / JCM 15750 / NBRC 105917 / EY 4224 / RW1) (Sphingomonas wittichii)).